The following is a 331-amino-acid chain: Peroxidase 69 (331 aa).

The signal sequence occupies residues 1–23 (MGRGYNLLFVLVTFLVLVAAVTA). Intrachain disulfides connect cysteine 46–cysteine 122, cysteine 79–cysteine 84, cysteine 128–cysteine 327, and cysteine 205–cysteine 237. Histidine 77 serves as the catalytic Proton acceptor. Residues aspartate 78, valine 81, glycine 83, aspartate 85, and serine 87 each contribute to the Ca(2+) site. Asparagine 93 carries an N-linked (GlcNAc...) asparagine glycan. Proline 168 serves as a coordination point for substrate. Histidine 198 serves as a coordination point for heme b. Threonine 199 is a Ca(2+) binding site. Asparagine 216 carries an N-linked (GlcNAc...) asparagine glycan. The Ca(2+) site is built by aspartate 248, serine 251, and aspartate 256.

Belongs to the peroxidase family. Classical plant (class III) peroxidase subfamily. Heme b serves as cofactor. Ca(2+) is required as a cofactor. Mainly expressed in roots and slightly in leaves.

It localises to the secreted. The enzyme catalyses 2 a phenolic donor + H2O2 = 2 a phenolic radical donor + 2 H2O. Removal of H(2)O(2), oxidation of toxic reductants, biosynthesis and degradation of lignin, suberization, auxin catabolism, response to environmental stresses such as wounding, pathogen attack and oxidative stress. These functions might be dependent on each isozyme/isoform in each plant tissue. This Arabidopsis thaliana (Mouse-ear cress) protein is Peroxidase 69 (PER69).